A 595-amino-acid chain; its full sequence is Pentatricopeptide repeat-containing protein At4g21065 (595 aa).

PPR repeat units follow at residues 84-118, 120-154, 155-185, 186-220, 221-255, 256-290, 291-317, 323-353, and 359-389; these read NVFIWNTLIRGYAEIGNSISAFSLYREMRVSGLVE, DTHTYPFLIKAVTTMADVRLGETIHSVVIRSGFGS, LIYVQNSLLHLYANCGDVASAYKVFDKMPEK, DLVAWNSVINGFAENGKPEEALALYTEMNSKGIKP, DGFTIVSLLSACAKIGALTLGKRVHVYMIKVGLTR, NLHSSNVLLDLYARCGRVEEAKTLFDEMVDKNSVS, WTSLIVGLAVNGFGKEAIELFKYMEST, CEITFVGILYACSHCGMVKEGFEYFRRMREE, and RIEHFGCMVDLLARAGQVKKAYEYIKSMPMQ. The type E motif stretch occupies residues 394-469; the sequence is IWRTLLGACT…VPGHSLVEVG (76 aa). The segment at 470 to 500 is type E(+) motif; sequence NRVHEFLMGDKSHPQSDAIYAKLKEMTGRLR. The segment at 501–595 is type DYW motif; that stretch reads SEGYVPQISN…NGSCSCQDYW (95 aa).

This sequence belongs to the PPR family. PCMP-H subfamily.

The protein is Pentatricopeptide repeat-containing protein At4g21065 (PCMP-H28) of Arabidopsis thaliana (Mouse-ear cress).